Consider the following 130-residue polypeptide: Lysozyme C, kidney isozyme (130 aa).

Residues 1–130 (KVFERCELAR…LTSYIQGCGV (130 aa)) enclose the C-type lysozyme domain. 4 cysteine pairs are disulfide-bonded: cysteine 6/cysteine 128, cysteine 30/cysteine 116, cysteine 65/cysteine 81, and cysteine 77/cysteine 95. Active-site residues include glutamate 35 and aspartate 53.

This sequence belongs to the glycosyl hydrolase 22 family. Monomer.

The protein resides in the secreted. It catalyses the reaction Hydrolysis of (1-&gt;4)-beta-linkages between N-acetylmuramic acid and N-acetyl-D-glucosamine residues in a peptidoglycan and between N-acetyl-D-glucosamine residues in chitodextrins.. Its function is as follows. Lysozymes have primarily a bacteriolytic function; those in tissues and body fluids are associated with the monocyte-macrophage system and enhance the activity of immunoagents. The protein is Lysozyme C, kidney isozyme of Ovis aries (Sheep).